The following is a 438-amino-acid chain: DNA primase DnaG (438 aa).

The Toprim domain occupies Asp-169–Tyr-243. 3 residues coordinate Mg(2+): Glu-175, Asp-217, and Asp-219.

This sequence belongs to the archaeal DnaG primase family. In terms of assembly, forms a ternary complex with MCM helicase and DNA. Mg(2+) serves as cofactor.

The catalysed reaction is ssDNA + n NTP = ssDNA/pppN(pN)n-1 hybrid + (n-1) diphosphate.. RNA polymerase that catalyzes the synthesis of short RNA molecules used as primers for DNA polymerase during DNA replication. This is DNA primase DnaG from Methanococcus maripaludis (strain C5 / ATCC BAA-1333).